A 335-amino-acid polypeptide reads, in one-letter code: 4-hydroxythreonine-4-phosphate dehydrogenase (335 aa).

His135 and Thr136 together coordinate substrate. A divalent metal cation-binding residues include His165, His210, and His265. Positions 273, 282, and 291 each coordinate substrate.

It belongs to the PdxA family. As to quaternary structure, homodimer. Requires Zn(2+) as cofactor. Mg(2+) serves as cofactor. Co(2+) is required as a cofactor.

The protein localises to the cytoplasm. The catalysed reaction is 4-(phosphooxy)-L-threonine + NAD(+) = 3-amino-2-oxopropyl phosphate + CO2 + NADH. It functions in the pathway cofactor biosynthesis; pyridoxine 5'-phosphate biosynthesis; pyridoxine 5'-phosphate from D-erythrose 4-phosphate: step 4/5. Its function is as follows. Catalyzes the NAD(P)-dependent oxidation of 4-(phosphooxy)-L-threonine (HTP) into 2-amino-3-oxo-4-(phosphooxy)butyric acid which spontaneously decarboxylates to form 3-amino-2-oxopropyl phosphate (AHAP). The protein is 4-hydroxythreonine-4-phosphate dehydrogenase of Saccharophagus degradans (strain 2-40 / ATCC 43961 / DSM 17024).